A 1373-amino-acid chain; its full sequence is Inactive tyrosine-protein kinase PRAG1 (1373 aa).

2 disordered regions span residues 31-50 (AGHPKARANSLPAGTRLPAR) and 197-235 (TSSCPKGPRPCTSPQPLRESLPSEDDSDQRCSPSGDSEG). Phosphotyrosine is present on tyrosine 238. 2 stretches are compositionally biased toward basic and acidic residues: residues 250–263 (DAVHSTEGSGRRGG) and 272–284 (QGPRTRPTEEEKQ). Residues 250–338 (DAVHSTEGSG…SGASSPFAPH (89 aa)) form a disordered region. Residues 317-333 (SSSDGLSCGSSRSGASS) are compositionally biased toward low complexity. A phosphotyrosine mark is found at tyrosine 343 and tyrosine 391. Disordered regions lie at residues 376 to 448 (QPAS…NPAP) and 468 to 794 (IYLS…LPQK). Positions 419-438 (SQGQVWTGDTWIQKTPPSWS) are enriched in polar residues. A compositionally biased stretch (basic and acidic residues) spans 506-522 (RESHPHNVTENTAKEKP). Low complexity predominate over residues 526-538 (PKLSKSSPGGSPV). Composition is skewed to polar residues over residues 568 to 578 (NLTSSCHTNGV) and 655 to 670 (TSGQNSKTNSGMSKSA). 2 positions are modified to phosphoserine: serine 671 and serine 720. Composition is skewed to polar residues over residues 711 to 721 (VSQSSAESLSP) and 729 to 740 (SFTTGSTDSLAS). 2 positions are modified to phosphoserine: serine 757 and serine 802. A disordered region spans residues 804–823 (PDGFFWTQGSPKPRTASPKL). The required for homodimerization stretch occupies residues 911-954 (STQLQLHSLLSSISSKEGTYAKLGGLYTQSLARLVTKCEDLFMG). The region spanning 945 to 1296 (VTKCEDLFMG…EAKRVLQCLL (352 aa)) is the Protein kinase domain. Residues 1041–1050 (LASPDTSSKD) are compositionally biased toward polar residues. Disordered regions lie at residues 1041–1062 (LASPDTSSKDTAPAVSPQPPAQ) and 1138–1171 (QSSPGPSATPTVPTTTSRCPSAAPAATTACQGGP). The span at 1139-1167 (SSPGPSATPTVPTTTSRCPSAAPAATTAC) shows a compositional bias: low complexity. Residues 1298-1373 (GPRRELVEQP…LQSLKLLQLL (76 aa)) form a required for homodimerization region.

Belongs to the protein kinase superfamily. As to quaternary structure, homodimer. Dimerization leads to the catalytic activation of CSK. Interacts (via C-terminus) with RND2. Interacts with CSK (via SH2 domain) in a Tyr-391 phosphorylation-dependent manner; this interaction potentiates kinase activity of CSK. Interacts with NOTCH1 intracellular domain (N1ICD). Forms a complex with PRAG1, N1ICD and MAML1, in a MAML1-dependent manner. Post-translationally, phosphorylated by CSK on Tyr-238, Tyr-343, and Tyr-391; Tyr-391 is a primary site of phosphorylation.

Its subcellular location is the cytoplasm. It is found in the nucleus. It localises to the cell junction. The protein localises to the focal adhesion. Catalytically inactive protein kinase that acts as a scaffold protein. Functions as an effector of the small GTPase RND2, which stimulates RhoA activity and inhibits NGF-induced neurite outgrowth. Promotes Src family kinase (SFK) signaling by regulating the subcellular localization of CSK, a negative regulator of these kinases, leading to the regulation of cell morphology and motility by a CSK-dependent mechanism. Acts as a critical coactivator of Notch signaling. In Mus musculus (Mouse), this protein is Inactive tyrosine-protein kinase PRAG1.